The chain runs to 538 residues: Nicotinate phosphoribosyltransferase (538 aa).

The nicotinate site is built by Y21 and T210. A Phosphohistidine modification is found at H213. R318 lines the nicotinate pocket. T380 is a 5-phospho-alpha-D-ribose 1-diphosphate binding site.

The protein belongs to the NAPRTase family. In terms of assembly, homodimer. Mg(2+) serves as cofactor. The cofactor is Mn(2+). Transiently phosphorylated on a His residue during the reaction cycle. Phosphorylation strongly increases the affinity for substrates and increases the rate of nicotinate D-ribonucleotide production. Dephosphorylation regenerates the low-affinity form of the enzyme, leading to product release.

The protein resides in the cytoplasm. The protein localises to the cytosol. The enzyme catalyses nicotinate + 5-phospho-alpha-D-ribose 1-diphosphate + ATP + H2O = nicotinate beta-D-ribonucleotide + ADP + phosphate + diphosphate. Its pathway is cofactor biosynthesis; NAD(+) biosynthesis; nicotinate D-ribonucleotide from nicotinate: step 1/1. In terms of biological role, catalyzes the first step in the biosynthesis of NAD from nicotinic acid, the ATP-dependent synthesis of beta-nicotinate D-ribonucleotide from nicotinate and 5-phospho-D-ribose 1-phosphate. Helps prevent cellular oxidative stress via its role in NAD biosynthesis. This is Nicotinate phosphoribosyltransferase (NAPRT) from Bos taurus (Bovine).